A 268-amino-acid chain; its full sequence is MSGKANASKKNAQQLKRNPKRKKDNEEVVLSENKVRNTVKKNKNHLKDLSSEGQTKHTNLKHGKTAASKRKTWQPLSKSTRDHLQTMMESVIMTILSNSIKEKEEIQYHLNFLKKRLLQQCETLKVPPKKMEDLTNVSSLLNMERARDKANEEGLALLQEEIDKMVETTELMTGNIQSLKNKIQILASEVEEEEERVKQMHQINSSGVLSLPELSQKTLKAPTLQKEILALIPNQNALLKDLDILHNSSQMKSMSTFIEEAYKKLDAS.

Positions 1-80 are disordered; it reads MSGKANASKK…KTWQPLSKST (80 aa). A phosphoserine mark is found at serine 31 and serine 50. Basic residues predominate over residues 58 to 72; that stretch reads TNLKHGKTAASKRKT. Positions 170–206 form a coiled coil; the sequence is ELMTGNIQSLKNKIQILASEVEEEEERVKQMHQINSS. Serine 249 is subject to Phosphoserine.

It belongs to the CENP-Q/OKP1 family. Component of the CENPA-CAD complex, composed of CENPI, CENPK, CENPL, CENPO, CENPP, CENPQ, CENPR and CENPS. The CENPA-CAD complex interacts with the CENPA-NAC complex, at least composed of CENPA, CENPC, CENPH, CENPM, CENPN, CENPT and CENPU. Post-translationally, phosphorylation at Ser-50 is essential for CENPE recruitment to kinetochores and orderly chromosome congression.

It localises to the nucleus. The protein resides in the chromosome. The protein localises to the centromere. Its function is as follows. Component of the CENPA-CAD (nucleosome distal) complex, a complex recruited to centromeres which is involved in assembly of kinetochore proteins, mitotic progression and chromosome segregation. May be involved in incorporation of newly synthesized CENPA into centromeres via its interaction with the CENPA-NAC complex. Plays an important role in chromosome congression and in the recruitment of CENP-O complex (which comprises CENPO, CENPP, CENPQ and CENPU), CENPE and PLK1 to the kinetochores. The sequence is that of Centromere protein Q (CENPQ) from Homo sapiens (Human).